The primary structure comprises 151 residues: Large ribosomal subunit protein uL16 (151 aa).

It belongs to the universal ribosomal protein uL16 family. Part of the 50S ribosomal subunit.

In terms of biological role, binds 23S rRNA and is also seen to make contacts with the A and possibly P site tRNAs. This Chloroflexus aurantiacus (strain ATCC 29364 / DSM 637 / Y-400-fl) protein is Large ribosomal subunit protein uL16.